A 166-amino-acid chain; its full sequence is Transcription elongation factor GreA (166 aa).

It belongs to the GreA/GreB family.

Functionally, necessary for efficient RNA polymerase transcription elongation past template-encoded arresting sites. The arresting sites in DNA have the property of trapping a certain fraction of elongating RNA polymerases that pass through, resulting in locked ternary complexes. Cleavage of the nascent transcript by cleavage factors such as GreA or GreB allows the resumption of elongation from the new 3'terminus. GreA releases sequences of 2 to 3 nucleotides. This chain is Transcription elongation factor GreA, found in Anaeromyxobacter sp. (strain K).